A 276-amino-acid chain; its full sequence is Insulin-like growth factor-binding protein 2-A (276 aa).

The signal sequence occupies residues 1–22; that stretch reads MLSYVSCGLLLALVTFHGTARS. One can recognise an IGFBP N-terminal domain in the interval 24–105; sequence MVFRCPSCTA…VQGLGRCGRK (82 aa). 9 cysteine pairs are disulfide-bonded: cysteine 28-cysteine 55, cysteine 31-cysteine 57, cysteine 39-cysteine 58, cysteine 46-cysteine 61, cysteine 69-cysteine 82, cysteine 76-cysteine 102, cysteine 180-cysteine 214, cysteine 225-cysteine 236, and cysteine 238-cysteine 259. The Thyroglobulin type-1 domain maps to 177–259; sequence QSQCQQELDQ…SPLIRGDPNC (83 aa). Residues 254 to 256 carry the Cell attachment site motif; it reads RGD.

As to quaternary structure, interacts equally well with igf1 and igf2. As to expression, in embryos at 24 hpf, initially expressed in the lens and cranial region, and at 48 and 72 hpf in the brain boundary vasculature. Expression in these regions persists throughout the hatching period and by 96 hpf expression is most abundant in the liver. In both male and female adults, highest expression is in the liver with modest expression in the brain. In male but not females adults, expressed at a low level in muscle and gonad. Also expressed in the adult intestine.

It localises to the secreted. IGF-binding proteins prolong the half-life of the IGFs and have been shown to either inhibit or stimulate the growth promoting effects of the IGFs on cell culture. They alter the interaction of IGFs with their cell surface receptors. The chain is Insulin-like growth factor-binding protein 2-A (igfbp2a) from Danio rerio (Zebrafish).